A 251-amino-acid chain; its full sequence is Mast cell protease 3 (251 aa).

An N-terminal signal peptide occupies residues 1-17 (MVLFLLLVALLSPAGEA). The propeptide at 18–19 (GK) is activation peptide. One can recognise a Peptidase S1 domain in the interval 20-243 (IIGGHEAKPH…FLSWIQRTMR (224 aa)). A disulfide bridge connects residues Cys-48 and Cys-64. The active-site Charge relay system is His-63. Asn-70 carries N-linked (GlcNAc...) asparagine glycosylation. The active-site Charge relay system is the Asp-107. 2 disulfides stabilise this stretch: Cys-141/Cys-207 and Cys-172/Cys-186. Ser-201 serves as the catalytic Charge relay system.

The protein belongs to the peptidase S1 family. Granzyme subfamily.

It localises to the secreted. The protein localises to the cytoplasmic granule. The sequence is that of Mast cell protease 3 from Ovis aries (Sheep).